Reading from the N-terminus, the 197-residue chain is dCTP deaminase, dUMP-forming (197 aa).

Residues 105 to 110, aspartate 123, 131 to 133, glutamine 152, tyrosine 166, lysine 174, and glutamine 178 contribute to the dCTP site; these read RSSMGR and TLE. The active-site Proton donor/acceptor is glutamate 133.

This sequence belongs to the dCTP deaminase family. In terms of assembly, homotrimer.

It catalyses the reaction dCTP + 2 H2O = dUMP + NH4(+) + diphosphate. It functions in the pathway pyrimidine metabolism; dUMP biosynthesis; dUMP from dCTP: step 1/1. Bifunctional enzyme that catalyzes both the deamination of dCTP to dUTP and the hydrolysis of dUTP to dUMP without releasing the toxic dUTP intermediate. This is dCTP deaminase, dUMP-forming from Methanosphaera stadtmanae (strain ATCC 43021 / DSM 3091 / JCM 11832 / MCB-3).